A 213-amino-acid chain; its full sequence is Large ribosomal subunit protein uL4 (213 aa).

The segment at 41 to 75 (GTASTKTRAEVSRSGKKMYSQKGTGNARHGDRSVP) is disordered.

Belongs to the universal ribosomal protein uL4 family. Part of the 50S ribosomal subunit.

In terms of biological role, one of the primary rRNA binding proteins, this protein initially binds near the 5'-end of the 23S rRNA. It is important during the early stages of 50S assembly. It makes multiple contacts with different domains of the 23S rRNA in the assembled 50S subunit and ribosome. Forms part of the polypeptide exit tunnel. In Deinococcus geothermalis (strain DSM 11300 / CIP 105573 / AG-3a), this protein is Large ribosomal subunit protein uL4.